The following is a 331-amino-acid chain: Adenosine deaminase (331 aa).

Residues H12 and H14 each contribute to the Zn(2+) site. Substrate is bound by residues H14, D16, and G170. H197 contributes to the Zn(2+) binding site. E200 acts as the Proton donor in catalysis. Position 278 (D278) interacts with Zn(2+).

It belongs to the metallo-dependent hydrolases superfamily. Adenosine and AMP deaminases family. Adenosine deaminase subfamily. Zn(2+) serves as cofactor.

It carries out the reaction adenosine + H2O + H(+) = inosine + NH4(+). It catalyses the reaction 2'-deoxyadenosine + H2O + H(+) = 2'-deoxyinosine + NH4(+). Its function is as follows. Catalyzes the hydrolytic deamination of adenosine and 2-deoxyadenosine. The polypeptide is Adenosine deaminase (Shewanella woodyi (strain ATCC 51908 / MS32)).